The sequence spans 148 residues: Probable glycine cleavage system H protein 2 (148 aa).

A Lipoyl-binding domain is found at 32–114 (VIVVGITDIA…YGKGWLVKMK (83 aa)). Lys73 carries the post-translational modification N6-lipoyllysine.

The protein belongs to the GcvH family. As to quaternary structure, the glycine cleavage system is composed of four proteins: P, T, L and H. Requires (R)-lipoate as cofactor.

Functionally, the glycine cleavage system catalyzes the degradation of glycine. The H protein shuttles the methylamine group of glycine from the P protein to the T protein. This Sulfurisphaera tokodaii (strain DSM 16993 / JCM 10545 / NBRC 100140 / 7) (Sulfolobus tokodaii) protein is Probable glycine cleavage system H protein 2.